Consider the following 514-residue polypeptide: Cholesterol side-chain cleavage enzyme, mitochondrial (514 aa).

The transit peptide at 1–39 (SFRLSLSASTYAQRGSFTTPEHDFTLFPHRNHSVTSESR) directs the protein to the mitochondrion. Cys461 serves as a coordination point for heme.

It belongs to the cytochrome P450 family. It depends on heme as a cofactor.

The protein localises to the mitochondrion inner membrane. It carries out the reaction 6 reduced [adrenodoxin] + cholesterol + 3 O2 + 6 H(+) = 4-methylpentanal + pregnenolone + 6 oxidized [adrenodoxin] + 4 H2O. Its pathway is lipid metabolism; C21-steroid hormone metabolism. Catalyzes the side-chain cleavage reaction of cholesterol to pregnenolone, the precursor of most steroid hormones. This Hypanus americanus (Southern stingray) protein is Cholesterol side-chain cleavage enzyme, mitochondrial (CYP11A1).